A 208-amino-acid polypeptide reads, in one-letter code: Large ribosomal subunit protein bL9 (208 aa).

The disordered stretch occupies residues 161-208 (KKRKIEKEVEEGSGTSVDESLKLDSVSDSIDTSGVNSSDKEEENNIIE). Positions 186 to 197 (VSDSIDTSGVNS) are enriched in polar residues.

This sequence belongs to the bacterial ribosomal protein bL9 family.

In terms of biological role, binds to the 23S rRNA. The chain is Large ribosomal subunit protein bL9 from Ehrlichia canis (strain Jake).